A 587-amino-acid chain; its full sequence is Ankyrin repeat and SOCS box protein 14 (587 aa).

ANK repeat units follow at residues 81 to 110 (NGWLPLHKAAVQLNKNILEITMNASEPSTW), 116 to 145 (NGETALFLAVSSSLLENAHFLLLKGCNPNA), 149 to 178 (EGNSPLLTAVLKDAYDMATLLISHGADVNL), 182 to 211 (NERTALHEAAKLGRLDMVKLMLASGAYPDA), 215 to 244 (YGFTPLALAAQGGHTGIMQLLLQKGADVHS), 248 to 277 (DSSSVLLEAVRGGNPEAVSLLLEYGADANI), 281 to 310 (SGHLPIHVAADKGHFLALKVLVPVTDIAAI), 313 to 342 (SGISPVHCAAAGAHPHCLELLIQAGFDVNF), 355 to 384 (QRKSALYFAVSNGDLPSVKLLLSAGALPNQ), 385 to 414 (DPVNCLQIALRMGNYELISLLLRHGANVNY), and 416 to 449 (CRVNPLHFPSALQYTLKDEVMLRMLLNYGYDTER). The SOCS box domain maps to 521-576 (WPEIHFILANPRSLQHLCRLKIRKCMGRLRLRCPVFMSFLPLPNLLKAYVLYKEYD).

It belongs to the ankyrin SOCS box (ASB) family. Interacts with MAPRE2; this interaction promotes MAPRE2 degradation.

The protein operates within protein modification; protein ubiquitination. Functionally, may be a substrate-recognition component of a SCF-like ECS (Elongin-Cullin-SOCS-box protein) E3 ubiquitin-protein ligase complex which mediates the ubiquitination and subsequent proteasomal degradation of target proteins. Plays a role in the inhibition of cardiomyocyte nuclear proliferation by mediating the ubiquitination and degradation of MAPRE2. This Mus musculus (Mouse) protein is Ankyrin repeat and SOCS box protein 14 (Asb14).